The chain runs to 281 residues: NADH--cytochrome b5 reductase 1 (281 aa).

The helical transmembrane segment at 13 to 33 threads the bilayer; sequence ILLGVFVAFVAVGAGAAYFLT. The short motif at 34–40 is the AKR2A-binding sequence (ABS) required for mitochondrion outer membrane targeting element; the sequence is SSKKRRV. The FAD-binding FR-type domain occupies 45-149; it reads ENFKEFKLVK…KGPKGRFKYQ (105 aa). FAD is bound by residues 129–144 and 155–187; these read REMR…GPKG and AFGM…KVHL. A Phosphothreonine modification is found at Thr-166.

Belongs to the flavoprotein pyridine nucleotide cytochrome reductase family. Monomer. Interacts with AKR2A. Requires FAD as cofactor. In terms of tissue distribution, expressed in roots, stems, flowers and siliques. Detected in leaves.

Its subcellular location is the mitochondrion outer membrane. It carries out the reaction 2 Fe(III)-[cytochrome b5] + NADH = 2 Fe(II)-[cytochrome b5] + NAD(+) + H(+). In terms of biological role, reductase transferring electrons from NADH to cytochrome b5. Required for the NADH-dependent electron transfer involved in the desaturation and hydroxylation of fatty acids and in the desaturation of sterol precursors. No activity with NADPH as electron donor. This is NADH--cytochrome b5 reductase 1 from Arabidopsis thaliana (Mouse-ear cress).